A 91-amino-acid polypeptide reads, in one-letter code: Putative defensin-like protein 83 (91 aa).

Residues 1–27 (MATNKFLSILLLSLMAFAAILLPMISG) form the signal peptide. 4 disulfides stabilise this stretch: Cys32-Cys71, Cys37-Cys57, Cys43-Cys69, and Cys47-Cys70.

It belongs to the DEFL family.

Its subcellular location is the secreted. The chain is Putative defensin-like protein 83 (LCR46) from Arabidopsis thaliana (Mouse-ear cress).